A 286-amino-acid chain; its full sequence is Isopentenyl-diphosphate Delta-isomerase II (286 aa).

Residues 104-256 (MLHRAFSVFL…GLKLSPWFRL (153 aa)) form the Nudix hydrolase domain. Catalysis depends on residues Cys-141 and Glu-203.

The protein belongs to the IPP isomerase type 1 family.

It carries out the reaction isopentenyl diphosphate = dimethylallyl diphosphate. It participates in isoprenoid biosynthesis; dimethylallyl diphosphate biosynthesis; dimethylallyl diphosphate from isopentenyl diphosphate: step 1/1. It functions in the pathway porphyrin-containing compound metabolism; chlorophyll biosynthesis. Its function is as follows. Catalyzes the 1,3-allylic rearrangement of the homoallylic substrate isopentenyl (IPP) to its highly electrophilic allylic isomer, dimethylallyl diphosphate (DMAPP). The polypeptide is Isopentenyl-diphosphate Delta-isomerase II (IPI2) (Clarkia breweri (Fairy fans)).